The following is a 254-amino-acid chain: Proteasome activator complex subunit 3 (254 aa).

A2 carries the post-translational modification N-acetylalanine. A phosphoserine mark is found at S17 and S24. Position 195 is an N6-acetyllysine; by P300/CBP (K195). S247 is modified (phosphoserine; by CHEK2).

Belongs to the PA28 family. In terms of assembly, homoheptamer; the stability of the heptamer is essential for the specific activation of the trypsine-like subunit and inhibition of the chymotrypsin-like and postglutamyl-preferring (PGPH) subunits of the proteasome. Interacts with p53/TP53, MDM2 and MAP3K3. Associates with the proteasome. Interacts with CCAR2. Interacts with PSME3IP1 (via C-terminus); the interaction is direct and promotes the association of PSME3 with the 20S proteasome. Interacts with COIL; the interaction is inhibited by PSME3IP1. In terms of processing, phosphorylated by MAP3K3. Phosphorylation at Ser-247 promotes its association with CCAR2. Acetylation at the major site Lys-195 is important for oligomerization and ability to degrade its target substrates. Deacetylated by SIRT1.

Its subcellular location is the nucleus. The protein resides in the cytoplasm. Functionally, subunit of the 11S REG-gamma (also called PA28-gamma) proteasome regulator, a doughnut-shaped homoheptamer which associates with the proteasome. 11S REG-gamma activates the trypsin-like catalytic subunit of the proteasome but inhibits the chymotrypsin-like and postglutamyl-preferring (PGPH) subunits. Facilitates the MDM2-p53/TP53 interaction which promotes ubiquitination- and MDM2-dependent proteasomal degradation of p53/TP53, limiting its accumulation and resulting in inhibited apoptosis after DNA damage. May also be involved in cell cycle regulation. Mediates CCAR2 and CHEK2-dependent SIRT1 inhibition. In Pongo abelii (Sumatran orangutan), this protein is Proteasome activator complex subunit 3 (PSME3).